A 49-amino-acid polypeptide reads, in one-letter code: Omega-segestritoxin-Sf1a (49 aa).

4 disulfide bridges follow: Cys3–Cys22, Cys10–Cys27, Cys21–Cys48, and Cys29–Cys46.

Expressed by the venom gland.

The protein localises to the secreted. Potent and selective blocker of N-type voltage-gated calcium channels (Cav2.2/CACNA1B). Also blocks vertebrate Cav2.1/CACNA1A (P/Q-type) and Cav1.2/CACNA1C (L-type) channels at very high concentration (2 micromolar). This chain is Omega-segestritoxin-Sf1a, found in Segestria florentina (Tube-web spider).